The sequence spans 134 residues: Acyl carrier protein SF2, chloroplastic (134 aa).

A chloroplast-targeting transit peptide spans 1–51 (MSTTFCSSVSMQATSLAATTRISFQKPALVSTTNLSFNLRRSIPTRFSISC). The region spanning 55–130 (PETVEKVSKI…EAAELIEELV (76 aa)) is the Carrier domain. Position 90 is an O-(pantetheine 4'-phosphoryl)serine (Ser-90).

It belongs to the acyl carrier protein (ACP) family. Post-translationally, 4'-phosphopantetheine is transferred from CoA to a specific serine of apo-ACP by acpS. This modification is essential for activity because fatty acids are bound in thioester linkage to the sulfhydryl of the prosthetic group.

The protein localises to the plastid. The protein resides in the chloroplast. Its pathway is lipid metabolism; fatty acid biosynthesis. Its function is as follows. Carrier of the growing fatty acid chain in fatty acid biosynthesis. The sequence is that of Acyl carrier protein SF2, chloroplastic (Acl1.1) from Brassica campestris (Field mustard).